A 120-amino-acid chain; its full sequence is Aspartate 1-decarboxylase (120 aa).

Serine 25 acts as the Schiff-base intermediate with substrate; via pyruvic acid in catalysis. Serine 25 carries the post-translational modification Pyruvic acid (Ser). Residue threonine 57 coordinates substrate. Tyrosine 58 acts as the Proton donor in catalysis. 73 to 75 (GAA) provides a ligand contact to substrate.

The protein belongs to the PanD family. As to quaternary structure, heterooctamer of four alpha and four beta subunits. Pyruvate serves as cofactor. In terms of processing, is synthesized initially as an inactive proenzyme, which is activated by self-cleavage at a specific serine bond to produce a beta-subunit with a hydroxyl group at its C-terminus and an alpha-subunit with a pyruvoyl group at its N-terminus.

It localises to the cytoplasm. It catalyses the reaction L-aspartate + H(+) = beta-alanine + CO2. The protein operates within cofactor biosynthesis; (R)-pantothenate biosynthesis; beta-alanine from L-aspartate: step 1/1. In terms of biological role, catalyzes the pyruvoyl-dependent decarboxylation of aspartate to produce beta-alanine. The polypeptide is Aspartate 1-decarboxylase (Deinococcus geothermalis (strain DSM 11300 / CIP 105573 / AG-3a)).